The primary structure comprises 312 residues: Bifunctional pinoresinol-lariciresinol reductase (312 aa).

NADP(+)-binding positions include 11 to 17 (GGTGYIG), arginine 36, and lysine 45. The active-site Proton acceptor is the lysine 138. Residue arginine 142 participates in NADP(+) binding. Residue histidine 270 coordinates substrate.

It belongs to the NmrA-type oxidoreductase family. Isoflavone reductase subfamily. In terms of assembly, dimer.

It carries out the reaction (+)-lariciresinol + NADP(+) = (+)-pinoresinol + NADPH + H(+). It catalyses the reaction (-)-secoisolariciresinol + NADP(+) = (+)-lariciresinol + NADPH + H(+). Its function is as follows. Reductase involved in lignan biosynthesis. Catalyzes the enantioselective sequential conversion of (+)-pinoresinol into (+)-lariciresinol and of (+)-lariciresinol into (-)-secoisolariciresinol. Abstracts the 4R-hydride from the NADPH cofactor during catalysis. This is Bifunctional pinoresinol-lariciresinol reductase from Thuja plicata (Western red-cedar).